The sequence spans 210 residues: Large ribosomal subunit protein uL3 (210 aa).

The protein belongs to the universal ribosomal protein uL3 family. Part of the 50S ribosomal subunit. Forms a cluster with proteins L14 and L19.

In terms of biological role, one of the primary rRNA binding proteins, it binds directly near the 3'-end of the 23S rRNA, where it nucleates assembly of the 50S subunit. This is Large ribosomal subunit protein uL3 from Caldicellulosiruptor bescii (strain ATCC BAA-1888 / DSM 6725 / KCTC 15123 / Z-1320) (Anaerocellum thermophilum).